The following is a 293-amino-acid chain: Thiamine-monophosphate kinase (293 aa).

5 residues coordinate Mg(2+): Glu25, Val39, Asp40, Asp68, and Asp113. Residues 112-113 and Arg136 each bind ATP; that span reads GD. Residue Asp194 participates in Mg(2+) binding. Residue Ser196 coordinates ATP. Residue Asp197 coordinates Mg(2+). Residues Glu243 and Trp286 each contribute to the substrate site.

It belongs to the thiamine-monophosphate kinase family. In terms of assembly, homodimer.

The catalysed reaction is thiamine phosphate + ATP = thiamine diphosphate + ADP. Its pathway is cofactor biosynthesis; thiamine diphosphate biosynthesis; thiamine diphosphate from thiamine phosphate: step 1/1. Its activity is regulated as follows. Is inhibited by AMP; the mode of AMP inhibition is uncompetitive for both TMP and ATP. In terms of biological role, catalyzes the ATP-dependent phosphorylation of thiamine-monophosphate (TMP) to form thiamine-pyrophosphate (TPP), the active form of vitamin B1. The chain is Thiamine-monophosphate kinase from Pyrobaculum calidifontis (strain DSM 21063 / JCM 11548 / VA1).